A 662-amino-acid chain; its full sequence is ABC transporter G family member 25 (662 aa).

Residues 1–30 (MSAFDGVENQMNGPDSSPRLSQDPREPRSL) form a disordered region. Positions 9–20 (NQMNGPDSSPRL) are enriched in polar residues. Asn56 is a glycosylation site (N-linked (GlcNAc...) asparagine). Residues 69 to 308 (QKPSDETRST…FESVGFSPAF (240 aa)) form the ABC transporter domain. Residue 101–108 (GPSGSGKS) coordinates ATP. Residue Asn122 is glycosylated (N-linked (GlcNAc...) asparagine). 7 helical membrane-spanning segments follow: residues 374-394 (VNGG…CILL), 406-426 (FDLL…LMWW), 437-457 (LGLL…NAVF), 489-509 (LSME…MVYL), 522-542 (VLLL…AAIM), 547-567 (ASTI…YYVN), and 629-649 (VIGD…FFGY). An ABC transmembrane type-2 domain is found at 388–594 (SQLCILLHRL…CYRLLVAIQY (207 aa)).

The protein belongs to the ABC transporter superfamily. ABCG family. Eye pigment precursor importer (TC 3.A.1.204) subfamily. As to expression, mainly expressed in vascular tissues,predominantly in phloem companion cells, with highest levels in roots and seeds, and lower levels in seedlings, stems, leaves and flowers. Mostly observed in inflorescence meristems relative to cauline leaves and developing siliques. In seeds, mainly expressed in the endosperm and, to a lesser extent, in the embryo.

Its subcellular location is the cell membrane. It catalyses the reaction abscisate(in) + ATP + H2O = abscisate(out) + ADP + phosphate + H(+). With respect to regulation, ADP and vanadate (ABC transporters inhibitor) inhibit the ATP-dependent abscisic acid (ABA) uptake. Its function is as follows. High affinity abscisic acid (ABA) transporter that mediates the export of ABA, with a preference for (+)-ABA, through the plasma membrane, especially in vascular tissues (e.g. phloem companion cells), and is involved in the intercellular ABA signaling pathway. Together with ABCG31, export ABA from the endosperm to deliver it to the embryo via ABCG30 and ABCG40-mediated import to suppress radicle extension and subsequent embryonic growth. In Arabidopsis thaliana (Mouse-ear cress), this protein is ABC transporter G family member 25.